Consider the following 965-residue polypeptide: FKBP12-associated protein 1 (965 aa).

The RING-type; degenerate zinc-finger motif lies at 68-118; sequence CMICTVEMDYTCQMFACKRCYRVFDYGCIREWALKSTEKTVDRIWKCPNCY. 5 consecutive NF-X1-type zinc fingers follow at residues 159-177, 216-235, 362-382, 468-487, and 586-606; these read CMHG…ECTR, CSIH…PCPE, CGKH…PCLQ, CGIH…PCLE, and CYHT…VCKQ. The 64-residue stretch at 733 to 796 folds into the R3H domain; that stretch reads ERWCSQIEAI…MRSVFIKKED (64 aa). The residue at position 951 (threonine 951) is a Phosphothreonine. The residue at position 958 (serine 958) is a Phosphoserine.

It belongs to the NFX1 family. As to quaternary structure, interacts with FPR1.

The protein resides in the cytoplasm. Its subcellular location is the nucleus. Its function is as follows. May play a role in transcription regulation. The sequence is that of FKBP12-associated protein 1 (FAP1) from Saccharomyces cerevisiae (strain ATCC 204508 / S288c) (Baker's yeast).